A 530-amino-acid polypeptide reads, in one-letter code: Phosphoenolpyruvate carboxykinase (ATP) (530 aa).

Arginine 60, tyrosine 195, and lysine 201 together coordinate substrate. Residues lysine 201, histidine 221, and 237–245 each bind ATP; that span reads GLSGTGKTT. Positions 201 and 221 each coordinate Mn(2+). Position 258 (aspartate 258) interacts with Mn(2+). The ATP site is built by glutamate 286, arginine 324, and serine 449. A substrate-binding site is contributed by arginine 324.

The protein belongs to the phosphoenolpyruvate carboxykinase (ATP) family. The cofactor is Mn(2+).

The protein resides in the cytoplasm. It carries out the reaction oxaloacetate + ATP = phosphoenolpyruvate + ADP + CO2. It participates in carbohydrate biosynthesis; gluconeogenesis. Involved in the gluconeogenesis. Catalyzes the conversion of oxaloacetate (OAA) to phosphoenolpyruvate (PEP) through direct phosphoryl transfer between the nucleoside triphosphate and OAA. The sequence is that of Phosphoenolpyruvate carboxykinase (ATP) from Geotalea uraniireducens (strain Rf4) (Geobacter uraniireducens).